The following is a 369-amino-acid chain: 2-aminoethylphosphonate--pyruvate transaminase (369 aa).

Lys-193 is subject to N6-(pyridoxal phosphate)lysine.

The protein belongs to the class-V pyridoxal-phosphate-dependent aminotransferase family. PhnW subfamily. In terms of assembly, homodimer. Pyridoxal 5'-phosphate serves as cofactor.

The enzyme catalyses (2-aminoethyl)phosphonate + pyruvate = phosphonoacetaldehyde + L-alanine. Involved in phosphonate degradation. The polypeptide is 2-aminoethylphosphonate--pyruvate transaminase (Burkholderia pseudomallei (strain 1106a)).